The chain runs to 225 residues: MNQDELKQAVAKAALDYIKPHLQSDTILGIGTGSTANYFIDALAEVRTQFEGAVASSEASAERLKKHNIPVYELNSVSGLEFYIDGADETNPRLELIKGGGAALTREKIVAANAKTFICIADESKWVDVLGDFPLPIEVIPMARSYVARELVKLGGDPVYREGCVTDNGNIILDVFNLRILEPVKLEQQINQITGVVTNGLFAMRPADVLLLGSQEGVKTIKVDA.

Substrate contacts are provided by residues 32–35 (TGST), 85–88 (DGAD), and 98–101 (KGGG). Glu107 (proton acceptor) is an active-site residue. Residue Lys125 coordinates substrate.

The protein belongs to the ribose 5-phosphate isomerase family. As to quaternary structure, homodimer.

The enzyme catalyses aldehydo-D-ribose 5-phosphate = D-ribulose 5-phosphate. The protein operates within carbohydrate degradation; pentose phosphate pathway; D-ribose 5-phosphate from D-ribulose 5-phosphate (non-oxidative stage): step 1/1. In terms of biological role, catalyzes the reversible conversion of ribose-5-phosphate to ribulose 5-phosphate. The chain is Ribose-5-phosphate isomerase A from Hahella chejuensis (strain KCTC 2396).